We begin with the raw amino-acid sequence, 141 residues long: ATP synthase epsilon chain (141 aa).

It belongs to the ATPase epsilon chain family. As to quaternary structure, F-type ATPases have 2 components, CF(1) - the catalytic core - and CF(0) - the membrane proton channel. CF(1) has five subunits: alpha(3), beta(3), gamma(1), delta(1), epsilon(1). CF(0) has three main subunits: a, b and c.

Its subcellular location is the cell inner membrane. Produces ATP from ADP in the presence of a proton gradient across the membrane. The chain is ATP synthase epsilon chain from Burkholderia ambifaria (strain ATCC BAA-244 / DSM 16087 / CCUG 44356 / LMG 19182 / AMMD) (Burkholderia cepacia (strain AMMD)).